The primary structure comprises 262 residues: MIRLDVPTPWGIRLQDSATPNAEGIHELYDHIMFYLCLILGLVSYILYVIIKDYKDNRFAYKYVRHGQVIEIIWTIFPAVILLLIAFPSFILLYLCDEVLTPAMTIKVIGLQWYWKYEYSDFVDSIGETIEFESYVIPDDMLEPGALRLLDTDTSIVVPVDTHIRFVVTANDVIHSFTIPSLGMKIDATPGRLNQVSALIQRTGVYYGQCSELCGVNHGMMPIKLECVSIEDFIEWLGENEVSLNSSMVEQCTVNALILVQF.

Helical transmembrane passes span 31–51 (HIMFYLCLILGLVSYILYVII) and 72–92 (IIWTIFPAVILLLIAFPSFIL). Residues histidine 175, cysteine 210, glutamate 212, cysteine 214, histidine 218, and methionine 221 each coordinate Cu cation. Glutamate 212 contributes to the Mg(2+) binding site.

Belongs to the cytochrome c oxidase subunit 2 family. As to quaternary structure, component of the cytochrome c oxidase (complex IV, CIV), a multisubunit enzyme composed of a catalytic core of 3 subunits and several supernumerary subunits. The complex exists as a monomer or a dimer and forms supercomplexes (SCs) in the inner mitochondrial membrane with ubiquinol-cytochrome c oxidoreductase (cytochrome b-c1 complex, complex III, CIII). Cu cation serves as cofactor.

The protein localises to the mitochondrion inner membrane. The catalysed reaction is 4 Fe(II)-[cytochrome c] + O2 + 8 H(+)(in) = 4 Fe(III)-[cytochrome c] + 2 H2O + 4 H(+)(out). Component of the cytochrome c oxidase, the last enzyme in the mitochondrial electron transport chain which drives oxidative phosphorylation. The respiratory chain contains 3 multisubunit complexes succinate dehydrogenase (complex II, CII), ubiquinol-cytochrome c oxidoreductase (cytochrome b-c1 complex, complex III, CIII) and cytochrome c oxidase (complex IV, CIV), that cooperate to transfer electrons derived from NADH and succinate to molecular oxygen, creating an electrochemical gradient over the inner membrane that drives transmembrane transport and the ATP synthase. Cytochrome c oxidase is the component of the respiratory chain that catalyzes the reduction of oxygen to water. Electrons originating from reduced cytochrome c in the intermembrane space (IMS) are transferred via the dinuclear copper A center (CU(A)) of subunit 2 and heme A of subunit 1 to the active site in subunit 1, a binuclear center (BNC) formed by heme A3 and copper B (CU(B)). The BNC reduces molecular oxygen to 2 water molecules using 4 electrons from cytochrome c in the IMS and 4 protons from the mitochondrial matrix. The chain is Cytochrome c oxidase subunit 2 (COX2) from Candida albicans (strain SC5314 / ATCC MYA-2876) (Yeast).